The following is an 81-amino-acid chain: Antitoxin VapB20 (81 aa).

In terms of biological role, antitoxin component of a type II toxin-antitoxin (TA) system. Neutralizes the toxic effect of cognate toxin VapC20. The sequence is that of Antitoxin VapB20 (vapB20) from Mycobacterium tuberculosis (strain CDC 1551 / Oshkosh).